The chain runs to 697 residues: Testis-specific gene 10 protein (697 aa).

Residues 556-688 (QMTNERISMQ…SPDRGLDRSL (133 aa)) are interaction with HIF1A. Residues 656–684 (NAYNLGPMKPNTKCHSPERAHHRSPDRGL) form a disordered region. Basic and acidic residues predominate over residues 670–684 (HSPERAHHRSPDRGL). Serine 687 is modified (phosphoserine).

Belongs to the CEP135/TSGA10 family. As to quaternary structure, interacts with HIF1A. Processed into N-terminal 27-kDa and C-terminal 55-kDa fragments. As to expression, predominantly expressed in testis, in spermatozoa (at protein level). Not detected in Leydig cells. The N-terminal 27-kDa fragment is also detected in liver, while the C-terminal 55-kDa fragment is also found retina, brain and kidney (at protein level).

Its subcellular location is the cytoplasm. It is found in the cytoskeleton. The protein resides in the microtubule organizing center. The protein localises to the centrosome. It localises to the centriole. Plays a role in spermatogenesis. When overexpressed, prevents nuclear localization of HIF1A. This chain is Testis-specific gene 10 protein (Tsga10), found in Mus musculus (Mouse).